Reading from the N-terminus, the 359-residue chain is Outer membrane protein assembly factor BamC (359 aa).

The N-terminal stretch at 1–21 (MSTLNKYKTLIIISSLAAVSS) is a signal peptide. Cys22 carries N-palmitoyl cysteine lipidation. A lipid anchor (S-diacylglycerol cysteine) is attached at Cys22.

This sequence belongs to the BamC family. As to quaternary structure, part of the Bam complex.

Its subcellular location is the cell outer membrane. Part of the outer membrane protein assembly complex, which is involved in assembly and insertion of beta-barrel proteins into the outer membrane. This chain is Outer membrane protein assembly factor BamC, found in Kangiella koreensis (strain DSM 16069 / JCM 12317 / KCTC 12182 / SW-125).